A 159-amino-acid chain; its full sequence is Insertion element IS136 uncharacterized 16.9 kDa protein (159 aa).

Over residues 126–142 the composition is skewed to low complexity; the sequence is RSFVSPSSSTPSTARSS. Residues 126-159 form a disordered region; sequence RSFVSPSSSTPSTARSSPGRPLPMQAFPAQTCAT.

The protein is Insertion element IS136 uncharacterized 16.9 kDa protein of Agrobacterium tumefaciens (strain T37).